The following is a 211-amino-acid chain: UPF0637 protein Bsph_1379 (211 aa).

This sequence belongs to the UPF0637 family.

This chain is UPF0637 protein Bsph_1379, found in Lysinibacillus sphaericus (strain C3-41).